The primary structure comprises 670 residues: NADH-ubiquinone oxidoreductase chain 5 (670 aa).

The next 15 membrane-spanning stretches (helical) occupy residues 3–23 (LLIVFLPLLGSSVAGFFGRFL), 36–56 (VSFSSILSLIAFYEVALGASA), 76–96 (FLFDSLTVVMLIVVTFISSLV), 113–133 (FMCYLSIFTFFMLMLVTGDNF), 136–156 (LFLGWEGVGLASYLLIHFWFT), 178–198 (LALGIFGCFTLFQTVDFSTIF), 218–238 (ITLICILLFIGAVGKSAQIGL), 250–270 (TPVSALIHAATMVTAGVFMIA), 283–303 (LIVITFAGAMTSFLAATTGIL), 319–339 (LGYMIFACGISNYSVSVFHLM), 340–360 (NHAFFKALLFLSAGSVIHAMS), 375–395 (FPLTYAMMLMGSLSLIGFPFL), 425–445 (VSVLFTSYYSFRLLFLTFLVP), 461–481 (IPMAIPLILLALGSLFVGYLA), and 618–638 (SGSVYHYAFAMLLGSTPFVTF).

This sequence belongs to the complex I subunit 5 family.

It localises to the mitochondrion inner membrane. It carries out the reaction a ubiquinone + NADH + 5 H(+)(in) = a ubiquinol + NAD(+) + 4 H(+)(out). Core subunit of the mitochondrial membrane respiratory chain NADH dehydrogenase (Complex I) that is believed to belong to the minimal assembly required for catalysis. Complex I functions in the transfer of electrons from NADH to the respiratory chain. The immediate electron acceptor for the enzyme is believed to be ubiquinone. In Triticum aestivum (Wheat), this protein is NADH-ubiquinone oxidoreductase chain 5 (ND5).